Here is a 393-residue protein sequence, read N- to C-terminus: METFLFTSESVNEGHPDKLCDQVSDAVLDACLAQDPDSKVACETCTRTNMVMVFGEITTKANVDYEQIVRDTCRSIGFTSDDVGLDADNCKVLVNIEQQSPDIAQGVHGHLTKKPEEIGAGDQGHMFGYATDETPELMPLSHVLATKLGARLTEVRKNGTCAWLRPDGKTQVTVEYYNGNGAMVPVRVHTVLISTQHDETVTNDEIAADLKQHVIKPVIPEKYLDEKTIFHLNPSGRFVIGGPHGDAGLTGRKIIIDTYGGWGAHGGGAFSGKDPTKVDRSGAYIVRQAAKSIVASGLARRCIVQVSYAIGVPEPLSVFVDSYGTGKIPDREILKIVKENFDFRPGMISVNLDLKRGGNGRFLKTAAYGHFGREDPDFTWEVVKPLKWDKVQA.

Residue glutamate 9 coordinates Mg(2+). Histidine 15 lines the ATP pocket. Glutamate 43 contributes to the K(+) binding site. Glutamate 56 and glutamine 99 together coordinate L-methionine. Residues 167–169 (DGK), 235–238 (SGRF), aspartate 246, 252–253 (RK), alanine 269, lysine 273, and lysine 277 each bind ATP. An L-methionine-binding site is contributed by aspartate 246. Lysine 277 provides a ligand contact to L-methionine.

It belongs to the AdoMet synthase family. In terms of assembly, homotetramer. The cofactor is Mn(2+). It depends on Mg(2+) as a cofactor. Co(2+) serves as cofactor. Requires K(+) as cofactor.

Its subcellular location is the cytoplasm. It carries out the reaction L-methionine + ATP + H2O = S-adenosyl-L-methionine + phosphate + diphosphate. It participates in amino-acid biosynthesis; S-adenosyl-L-methionine biosynthesis; S-adenosyl-L-methionine from L-methionine: step 1/1. In terms of biological role, catalyzes the formation of S-adenosylmethionine from methionine and ATP. The reaction comprises two steps that are both catalyzed by the same enzyme: formation of S-adenosylmethionine (AdoMet) and triphosphate, and subsequent hydrolysis of the triphosphate. The polypeptide is S-adenosylmethionine synthase (SAMS) (Litchi chinensis (Lychee)).